The sequence spans 157 residues: UPF0254 protein MTH_1148 (157 aa).

The protein belongs to the UPF0254 family.

This chain is UPF0254 protein MTH_1148, found in Methanothermobacter thermautotrophicus (strain ATCC 29096 / DSM 1053 / JCM 10044 / NBRC 100330 / Delta H) (Methanobacterium thermoautotrophicum).